Consider the following 187-residue polypeptide: Accessory gene regulator protein B (187 aa).

5 consecutive transmembrane segments (helical) span residues 49–69 (LAYI…FYLI), 82–102 (FWCY…VLHF), 107–127 (TLMM…APAA), 143–163 (YFSI…KEPY), and 164–184 (TQFI…IYYS).

The protein belongs to the AgrB family.

The protein resides in the cell membrane. Functionally, essential for the production of a quorum sensing system signal molecule, the autoinducing peptide (AIP). This quorum sensing system is responsible for the regulation of the expression of virulence factor genes. Involved in the proteolytic processing of AgrD, the precursor of AIP. The chain is Accessory gene regulator protein B from Staphylococcus aureus (strain MRSA252).